The primary structure comprises 1063 residues: Cation efflux system protein CzcA (1063 aa).

Transmembrane regions (helical) follow at residues 14–29 (WLVL…LGIF), 350–370 (GAVL…AALI), 452–472 (LIFG…LTGV), 487–507 (ALLG…ALFI), 534–554 (LANT…CVAI), 883–903 (VVVP…FNNI), 906–926 (GLLV…ALWI), 937–957 (VGFI…LSFI), 982–1004 (VLMT…GTGA), and 1013–1033 (VVIG…PVLY). The segment at 1040–1063 (DEDAEDTREPVTQTHQPDQGRQPA) is disordered. Polar residues predominate over residues 1049-1063 (PVTQTHQPDQGRQPA).

This sequence belongs to the resistance-nodulation-cell division (RND) (TC 2.A.6) family.

It is found in the cell membrane. In terms of biological role, has a low cation transport activity for cobalt, it is essential for the expression of cobalt, zinc, and cadmium resistance. CzcA and CzcB together would act in zinc efflux nearly as effectively as the complete CZC efflux system (CzcABC). The polypeptide is Cation efflux system protein CzcA (czcA) (Alcaligenes sp. (strain CT14)).